Here is a 517-residue protein sequence, read N- to C-terminus: ATP synthase subunit alpha 1 (517 aa).

176–183 (GDRQTGKT) serves as a coordination point for ATP.

It belongs to the ATPase alpha/beta chains family. In terms of assembly, F-type ATPases have 2 components, CF(1) - the catalytic core - and CF(0) - the membrane proton channel. CF(1) has five subunits: alpha(3), beta(3), gamma(1), delta(1), epsilon(1). CF(0) has three main subunits: a(1), b(2) and c(9-12). The alpha and beta chains form an alternating ring which encloses part of the gamma chain. CF(1) is attached to CF(0) by a central stalk formed by the gamma and epsilon chains, while a peripheral stalk is formed by the delta and b chains.

It localises to the cell inner membrane. The catalysed reaction is ATP + H2O + 4 H(+)(in) = ADP + phosphate + 5 H(+)(out). In terms of biological role, produces ATP from ADP in the presence of a proton gradient across the membrane. The alpha chain is a regulatory subunit. In Shewanella frigidimarina (strain NCIMB 400), this protein is ATP synthase subunit alpha 1.